A 320-amino-acid polypeptide reads, in one-letter code: Cyclin-D6-1 (320 aa).

The tract at residues 279–320 (HHRSASSESERTTTVGSAANSADAKRRCMGPPRQWGVGGPDE) is disordered.

It belongs to the cyclin family. Cyclin D subfamily.

This is Cyclin-D6-1 (CYCD6-1) from Oryza sativa subsp. japonica (Rice).